A 369-amino-acid polypeptide reads, in one-letter code: Terpene cyclase DEP1 (369 aa).

Helical transmembrane passes span 9–29 (FFYL…FNGM), 82–102 (LLFF…LIES), 118–138 (AMVL…LYLV), 157–177 (ALLV…VPAW), 190–210 (IALF…LASI), 234–254 (LVLA…GALI), 298–318 (LFSQ…SHLL), and 342–362 (LVYL…SFAL).

The protein belongs to the membrane-bound ascI terpene cyclase family.

The protein resides in the membrane. The protein operates within polyketide biosynthesis. Functionally, part of the gene cluster that mediates the biosynthesis of depudecin, a highly oxidized eleven-carbon linear polyketide that acts as a histone deacetylase (HDAC) inhibitor and makes a small contribution to pathogenesis. The reducing polyketide synthase DEP5 is the central enzyme in depudecin biosynthesis by yielding the backbone polyketide chain. The monooxygenases DEP2 and DEP4, as well as the uncharacterized protein DEP1, then act as tailoring enzymes to modify the intermediate polyketide chain into depudecin. The polypeptide is Terpene cyclase DEP1 (Alternaria brassicicola (Dark leaf spot agent)).